A 148-amino-acid chain; its full sequence is MPTHVSKTRKLRGHVSAGHGRIGKHRKHPGGRGKAGGLQHLRSHFDKYHPGYFGKVGMRRFHLMKNPLWRPTVNLDRLWTLLPNEARDKYLGKNTEVAPVINVLQSGYGKVLGKGRLPETPVIVQTRYVSRRAEEKIKQAGGVVELIA.

Basic residues-rich tracts occupy residues 1–13 (MPTH…KLRG) and 21–31 (RIGKHRKHPGG). A disordered region spans residues 1–36 (MPTHVSKTRKLRGHVSAGHGRIGKHRKHPGGRGKAG).

It belongs to the universal ribosomal protein uL15 family. Component of the large ribosomal subunit (LSU). Mature yeast ribosomes consist of a small (40S) and a large (60S) subunit. The 40S small subunit contains 1 molecule of ribosomal RNA (18S rRNA) and at least 33 different proteins. The large 60S subunit contains 3 rRNA molecules (25S, 5.8S and 5S rRNA) and at least 46 different proteins.

Its subcellular location is the cytoplasm. In terms of biological role, component of the ribosome, a large ribonucleoprotein complex responsible for the synthesis of proteins in the cell. The small ribosomal subunit (SSU) binds messenger RNAs (mRNAs) and translates the encoded message by selecting cognate aminoacyl-transfer RNA (tRNA) molecules. The large subunit (LSU) contains the ribosomal catalytic site termed the peptidyl transferase center (PTC), which catalyzes the formation of peptide bonds, thereby polymerizing the amino acids delivered by tRNAs into a polypeptide chain. The nascent polypeptides leave the ribosome through a tunnel in the LSU and interact with protein factors that function in enzymatic processing, targeting, and the membrane insertion of nascent chains at the exit of the ribosomal tunnel. This Schizosaccharomyces pombe (strain 972 / ATCC 24843) (Fission yeast) protein is Large ribosomal subunit protein uL15A (rpl2802).